Here is a 184-residue protein sequence, read N- to C-terminus: Photosystem I assembly protein Ycf4 (184 aa).

2 consecutive transmembrane segments (helical) span residues 19–39 (ISNF…LLVG) and 57–77 (IIFF…LFIS).

Belongs to the Ycf4 family.

It localises to the plastid. The protein localises to the chloroplast thylakoid membrane. Its function is as follows. Seems to be required for the assembly of the photosystem I complex. This is Photosystem I assembly protein Ycf4 from Solanum bulbocastanum (Wild potato).